The chain runs to 336 residues: PHD finger protein 11 (336 aa).

The interval 1 to 20 is disordered; that stretch reads MAEETAPPCGPVSTGGSLSP. The C2HC pre-PHD-type zinc finger occupies 25–61; sequence KRTCALCPDGHEWSVIYFAPSANIAAHENCLLYSSGL. A PHD-type zinc finger spans residues 91-143; sequence LKCSLCNKGGATVGCDLSSCRKSYHYVCAKKDHAIPQVDEDLGTYKIFCPEHP. Disordered stretches follow at residues 139–179 and 303–336; these read CPEH…KKMK and DPSGSTSGSLLPPEDHQCRCQESPEVQAGSGDSL. Over residues 303–314 the composition is skewed to low complexity; the sequence is DPSGSTSGSLLP.

As to quaternary structure, interacts with BRCA1 and RELA.

Its subcellular location is the nucleus. In terms of biological role, positive regulator of Th1-type cytokine gene expression. The protein is PHD finger protein 11 (Phf11) of Rattus norvegicus (Rat).